The following is a 134-amino-acid chain: Protein Turandot E (134 aa).

An N-terminal signal peptide occupies residues 1–38 (MSNTRTVHSSTSISKMNSALQISCLLVVLGCLLGSGHC).

The protein belongs to the Turandot family.

The protein localises to the secreted. A humoral factor that may play a role in stress tolerance. The protein is Protein Turandot E of Drosophila melanogaster (Fruit fly).